Consider the following 376-residue polypeptide: Succinyl-diaminopimelate desuccinylase (376 aa).

H66 lines the Zn(2+) pocket. The active site involves D68. D99 lines the Zn(2+) pocket. Catalysis depends on E133, which acts as the Proton acceptor. Zn(2+)-binding residues include E134, E162, and H348.

This sequence belongs to the peptidase M20A family. DapE subfamily. As to quaternary structure, homodimer. It depends on Zn(2+) as a cofactor. Requires Co(2+) as cofactor.

The catalysed reaction is N-succinyl-(2S,6S)-2,6-diaminopimelate + H2O = (2S,6S)-2,6-diaminopimelate + succinate. It participates in amino-acid biosynthesis; L-lysine biosynthesis via DAP pathway; LL-2,6-diaminopimelate from (S)-tetrahydrodipicolinate (succinylase route): step 3/3. Its function is as follows. Catalyzes the hydrolysis of N-succinyl-L,L-diaminopimelic acid (SDAP), forming succinate and LL-2,6-diaminopimelate (DAP), an intermediate involved in the bacterial biosynthesis of lysine and meso-diaminopimelic acid, an essential component of bacterial cell walls. The chain is Succinyl-diaminopimelate desuccinylase from Thioalkalivibrio sulfidiphilus (strain HL-EbGR7).